A 139-amino-acid polypeptide reads, in one-letter code: Large ribosomal subunit protein bL17 (139 aa).

The disordered stretch occupies residues 117–139 (DRDPEAKGQDSGPVEIKDESEEG).

The protein belongs to the bacterial ribosomal protein bL17 family. Part of the 50S ribosomal subunit. Contacts protein L32.

This is Large ribosomal subunit protein bL17 from Rhodospirillum centenum (strain ATCC 51521 / SW).